The sequence spans 737 residues: Catalase-peroxidase (737 aa).

Residues 1-29 (MTDSPDATTGGCPVAHGDRLPHPTQGGAN) form a disordered region. The tryptophyl-tyrosyl-methioninium (Trp-Tyr) (with M-253) cross-link spans 101 to 227 (WHSAGTYRVS…LGATHMGLIY (127 aa)). Histidine 102 functions as the Proton acceptor in the catalytic mechanism. A cross-link (tryptophyl-tyrosyl-methioninium (Tyr-Met) (with W-101)) is located at residues 227–253 (YVNPEGPEGKPDPVAAARDIRETFGRM). Histidine 268 is a binding site for heme b.

The protein belongs to the peroxidase family. Peroxidase/catalase subfamily. As to quaternary structure, homodimer or homotetramer. Heme b serves as cofactor. Formation of the three residue Trp-Tyr-Met cross-link is important for the catalase, but not the peroxidase activity of the enzyme.

The enzyme catalyses H2O2 + AH2 = A + 2 H2O. It catalyses the reaction 2 H2O2 = O2 + 2 H2O. Functionally, bifunctional enzyme with both catalase and broad-spectrum peroxidase activity. The protein is Catalase-peroxidase of Saccharopolyspora erythraea (strain ATCC 11635 / DSM 40517 / JCM 4748 / NBRC 13426 / NCIMB 8594 / NRRL 2338).